Reading from the N-terminus, the 199-residue chain is Recombination protein RecR (199 aa).

Residues 56–71 (CTVCFNVTEQETCNIC) form a C4-type zinc finger. Residues 79–174 (SVICVVEESK…TVTRLASGLP (96 aa)) enclose the Toprim domain.

It belongs to the RecR family.

May play a role in DNA repair. It seems to be involved in an RecBC-independent recombinational process of DNA repair. It may act with RecF and RecO. This Paenarthrobacter aurescens (strain TC1) protein is Recombination protein RecR.